A 440-amino-acid polypeptide reads, in one-letter code: MSKIVYKFGGTSLATAENICLVCDIICKDKPSFVVVSAIAGVTDLLVDFCSSSLREREEVLRKIEGKHEEIVKNLAIPFPVSTWTSRLLPYLQHLEISDLDFARILSLGEDISASLVRAVCSTRGWDLGFLEARSVILTDDSYRRASPNLDLMKAHWHQLELNQPSYIIQGFIGSNGLGETVLLGRGGSDYSATLIAELARATEVRIYTDVNGIYTMDPKVISDAQRIPELSFEEMQNLASFGAKVLYPPMLFPCMRAGIPIFVTSTFDPEKGGTWVYAVDKSVSYEPRIKALSLSQYQSFCSVDYTVLGCGGLEEILGILESHGIDPELMIAQNNVVGFVMDDDIISQEAQEHLVDVLSLSSVTRLHHSVALITMIGDNLSSPKVVSTITEKLRGFQGPVFCFCQSSMALSFVVASELAEGIIEELHNDYVKQKAIVAT.

Belongs to the aspartokinase family.

It carries out the reaction L-aspartate + ATP = 4-phospho-L-aspartate + ADP. It participates in amino-acid biosynthesis; L-lysine biosynthesis via DAP pathway; (S)-tetrahydrodipicolinate from L-aspartate: step 1/4. It functions in the pathway amino-acid biosynthesis; L-methionine biosynthesis via de novo pathway; L-homoserine from L-aspartate: step 1/3. Its pathway is amino-acid biosynthesis; L-threonine biosynthesis; L-threonine from L-aspartate: step 1/5. The protein is Aspartokinase (lysC) of Chlamydia pneumoniae (Chlamydophila pneumoniae).